The sequence spans 138 residues: Secreted RxLR effector protein 91 (138 aa).

The first 18 residues, methionine 1–cysteine 18, serve as a signal peptide directing secretion. The RxLR motif lies at arginine 34–arginine 37. The N-linked (GlcNAc...) asparagine glycan is linked to asparagine 93.

This sequence belongs to the RxLR effector family.

It localises to the secreted. It is found in the host nucleus. Functionally, secreted effector that completely suppresses the host cell death induced by cell death-inducing proteins. The sequence is that of Secreted RxLR effector protein 91 from Plasmopara viticola (Downy mildew of grapevine).